The chain runs to 82 residues: Small ribosomal subunit protein uS17 (82 aa).

The protein belongs to the universal ribosomal protein uS17 family. Part of the 30S ribosomal subunit.

One of the primary rRNA binding proteins, it binds specifically to the 5'-end of 16S ribosomal RNA. The protein is Small ribosomal subunit protein uS17 of Paracoccus denitrificans (strain Pd 1222).